We begin with the raw amino-acid sequence, 258 residues long: MKNYLLQIEYFGKNYCGWQRQSHSPSVQEELEKALSKIANQNIEVTCAGRTDTGVHATSQIVNFYSNADRPLSAWQRGVNALLPQDIKILAVQQVDNNFNSRFTAINRTYNYIIYNSATSSPIFAEHCLWENRELDIDKMNQACEYLLGEQDFSSFRSSQCQSNTPFRNIQKAEFIKQGSFIVFEVVGNAFLHHMIRNLVGSLLKVGLGFESPEWIKVVLEAKDRTQAAETAKAHGLYFVGVEYPEFSFKRQIIKLFC.

D52 (nucleophile) is an active-site residue. Y110 is a substrate binding site.

Belongs to the tRNA pseudouridine synthase TruA family. In terms of assembly, homodimer.

It catalyses the reaction uridine(38/39/40) in tRNA = pseudouridine(38/39/40) in tRNA. Its function is as follows. Formation of pseudouridine at positions 38, 39 and 40 in the anticodon stem and loop of transfer RNAs. This chain is tRNA pseudouridine synthase A, found in Francisella tularensis subsp. tularensis (strain FSC 198).